Consider the following 505-residue polypeptide: tRNA-2-methylthio-N(6)-dimethylallyladenosine synthase (505 aa).

Positions 14 to 132 constitute an MTTase N-terminal domain; it reads RTYEVRTYGC…LPVLLERARV (119 aa). Positions 23, 61, 95, 169, 173, and 176 each coordinate [4Fe-4S] cluster. The region spanning 155 to 386 is the Radical SAM core domain; the sequence is RESAYAAWVS…ALQEEISWEE (232 aa). The region spanning 388-456 is the TRAM domain; that stretch reads KKQVGRTLEL…PHHLLAEGPV (69 aa).

The protein belongs to the methylthiotransferase family. MiaB subfamily. As to quaternary structure, monomer. [4Fe-4S] cluster is required as a cofactor.

It is found in the cytoplasm. It carries out the reaction N(6)-dimethylallyladenosine(37) in tRNA + (sulfur carrier)-SH + AH2 + 2 S-adenosyl-L-methionine = 2-methylsulfanyl-N(6)-dimethylallyladenosine(37) in tRNA + (sulfur carrier)-H + 5'-deoxyadenosine + L-methionine + A + S-adenosyl-L-homocysteine + 2 H(+). Functionally, catalyzes the methylthiolation of N6-(dimethylallyl)adenosine (i(6)A), leading to the formation of 2-methylthio-N6-(dimethylallyl)adenosine (ms(2)i(6)A) at position 37 in tRNAs that read codons beginning with uridine. This chain is tRNA-2-methylthio-N(6)-dimethylallyladenosine synthase, found in Streptomyces viridosporus (strain ATCC 14672 / DSM 40746 / JCM 4963 / KCTC 9882 / NRRL B-12104 / FH 1290) (Streptomyces ghanaensis).